A 319-amino-acid polypeptide reads, in one-letter code: Urease accessory protein UreD (319 aa).

Residues 298–319 are disordered; it reads QEQPLPPSSFKTNTAVPAVRTH.

It belongs to the UreD family. In terms of assembly, ureD, UreF and UreG form a complex that acts as a GTP-hydrolysis-dependent molecular chaperone, activating the urease apoprotein by helping to assemble the nickel containing metallocenter of UreC. The UreE protein probably delivers the nickel.

The protein resides in the cytoplasm. Its function is as follows. Required for maturation of urease via the functional incorporation of the urease nickel metallocenter. The protein is Urease accessory protein UreD of Synechococcus sp. (strain WH7805).